Reading from the N-terminus, the 482-residue chain is UDP-glycosyltransferase 1 (482 aa).

N-linked (GlcNAc...) asparagine glycosylation is present at Asn-243. The chain crosses the membrane as a helical span at residues 450 to 470 (IYLVYALVLGSAWWIGKTILG).

It belongs to the glycosyltransferase 28 family.

The protein resides in the membrane. The catalysed reaction is exophillate aglycone + UDP-alpha-D-glucose = exophillate + UDP + H(+). The protein operates within secondary metabolite biosynthesis. In terms of biological role, acts as a depside 2-O-glucosyltransferase that catalyzes the first glycosylation step during phaeomoniecin D biosynthesis by producing the intermediate exophillic acid which is further O-galactosylated into phaeomoniecin D by the C-galactosyltransferase OGT2. This Phaeomoniella chlamydospora (Phaeoacremonium chlamydosporum) protein is UDP-glycosyltransferase 1.